The sequence spans 73 residues: Translation initiation factor IF-1 (73 aa).

One can recognise an S1-like domain in the interval 1–73 (MSKKKDVIEM…TRGRITYRYK (73 aa)).

Belongs to the IF-1 family. Component of the 30S ribosomal translation pre-initiation complex which assembles on the 30S ribosome in the order IF-2 and IF-3, IF-1 and N-formylmethionyl-tRNA(fMet); mRNA recruitment can occur at any time during PIC assembly.

It localises to the cytoplasm. One of the essential components for the initiation of protein synthesis. Stabilizes the binding of IF-2 and IF-3 on the 30S subunit to which N-formylmethionyl-tRNA(fMet) subsequently binds. Helps modulate mRNA selection, yielding the 30S pre-initiation complex (PIC). Upon addition of the 50S ribosomal subunit IF-1, IF-2 and IF-3 are released leaving the mature 70S translation initiation complex. The protein is Translation initiation factor IF-1 of Roseiflexus castenholzii (strain DSM 13941 / HLO8).